A 586-amino-acid chain; its full sequence is Aspartate--tRNA(Asp/Asn) ligase (586 aa).

Glutamate 172 is a binding site for L-aspartate. An aspartate region spans residues 196-199; that stretch reads QLYK. Residue arginine 218 coordinates L-aspartate. Residues 218 to 220 and glutamine 227 contribute to the ATP site; that span reads RDE. Residue histidine 446 participates in L-aspartate binding. An ATP-binding site is contributed by glutamate 480. Arginine 487 lines the L-aspartate pocket. 532 to 535 serves as a coordination point for ATP; it reads GIDR.

The protein belongs to the class-II aminoacyl-tRNA synthetase family. Type 1 subfamily. In terms of assembly, homodimer.

The protein localises to the cytoplasm. It carries out the reaction tRNA(Asx) + L-aspartate + ATP = L-aspartyl-tRNA(Asx) + AMP + diphosphate. Its function is as follows. Aspartyl-tRNA synthetase with relaxed tRNA specificity since it is able to aspartylate not only its cognate tRNA(Asp) but also tRNA(Asn). Reaction proceeds in two steps: L-aspartate is first activated by ATP to form Asp-AMP and then transferred to the acceptor end of tRNA(Asp/Asn). The polypeptide is Aspartate--tRNA(Asp/Asn) ligase (Borrelia garinii subsp. bavariensis (strain ATCC BAA-2496 / DSM 23469 / PBi) (Borreliella bavariensis)).